We begin with the raw amino-acid sequence, 156 residues long: Myosin regulatory light chain, striated adductor muscle (156 aa).

The residue at position 1 (A1) is a Blocked amino end (Ala). EF-hand domains are found at residues K15 to T50 and D84 to N119. Ca(2+)-binding residues include D28, D30, D32, and D39.

In molluscan muscle, calcium regulation is associated with myosin rather than with actin. Muscle myosin contains two types of light chains: the catalytic light chain, essential for ATPase activity, and the regulatory light chain, a calcium-binding protein responsible for Ca(2+) dependent binding and Ca(2+) dependent Mg-ATPase activity. This Chlamys nipponensis akazara (Akazara scallop) protein is Myosin regulatory light chain, striated adductor muscle.